The chain runs to 290 residues: Fructose-bisphosphate aldolase (290 aa).

A D-glyceraldehyde 3-phosphate-binding site is contributed by Ser-51. Asp-86 (proton donor) is an active-site residue. Zn(2+) is bound by residues His-87, Asp-107, Glu-137, and His-179. Gly-180 contributes to the dihydroxyacetone phosphate binding site. His-208 contacts Zn(2+). Dihydroxyacetone phosphate is bound by residues 209 to 211 and 230 to 233; these read GGS and NINT.

It belongs to the class II fructose-bisphosphate aldolase family. As to quaternary structure, homodimer. Zn(2+) serves as cofactor.

It catalyses the reaction beta-D-fructose 1,6-bisphosphate = D-glyceraldehyde 3-phosphate + dihydroxyacetone phosphate. The protein operates within carbohydrate degradation; glycolysis; D-glyceraldehyde 3-phosphate and glycerone phosphate from D-glucose: step 4/4. In terms of biological role, catalyzes the aldol condensation of dihydroxyacetone phosphate (DHAP or glycerone-phosphate) with glyceraldehyde 3-phosphate (G3P) to form fructose 1,6-bisphosphate (FBP) in gluconeogenesis and the reverse reaction in glycolysis. The sequence is that of Fructose-bisphosphate aldolase (fba) from Ureaplasma parvum serovar 3 (strain ATCC 700970).